The primary structure comprises 253 residues: MRMTANATIDPSEVARFDALGAQWWDPKGKMAPLHAINPVRLGFVRDVLVRHFGHDARSLRPLKGLRILDIGCGGGLLSEPLARMGADMVGVDPAPGNIVVAQSHADEAGVRVDYRQGTAEELADAGERFDVVLALEVVEHVADVGLFLRRAGEMVNPNGIMIVSTLNRTVKSFALAIVGAEYVLRWLPRGTHRWDKFITPAELEAEMGAAGFEMSELAGMVFDPLRGEWKIAADTDVNYFLVGKPAFHTSEG.

S-adenosyl-L-methionine is bound by residues Arg41, Gly72, Asp93, and Leu136.

The protein belongs to the methyltransferase superfamily. UbiG/COQ3 family.

It catalyses the reaction a 3-demethylubiquinol + S-adenosyl-L-methionine = a ubiquinol + S-adenosyl-L-homocysteine + H(+). The catalysed reaction is a 3-(all-trans-polyprenyl)benzene-1,2-diol + S-adenosyl-L-methionine = a 2-methoxy-6-(all-trans-polyprenyl)phenol + S-adenosyl-L-homocysteine + H(+). It functions in the pathway cofactor biosynthesis; ubiquinone biosynthesis. O-methyltransferase that catalyzes the 2 O-methylation steps in the ubiquinone biosynthetic pathway. This Azorhizobium caulinodans (strain ATCC 43989 / DSM 5975 / JCM 20966 / LMG 6465 / NBRC 14845 / NCIMB 13405 / ORS 571) protein is Ubiquinone biosynthesis O-methyltransferase.